A 127-amino-acid polypeptide reads, in one-letter code: Nuclear transport factor 2 (127 aa).

In terms of domain architecture, NTF2 spans 11 to 124; the sequence is VGKQFVEHYY…FLLINDFFRL (114 aa).

The protein resides in the cytoplasm. It localises to the cytosol. Its subcellular location is the nucleus outer membrane. It is found in the nucleus. The protein localises to the nuclear pore complex. The protein resides in the nucleus inner membrane. It localises to the nucleoplasm. Functionally, mediates the import of GDP-bound RAN from the cytoplasm into the nucleus which is essential for the function of RAN in cargo receptor-mediated nucleocytoplasmic transport. Thereby, plays indirectly a more general role in cargo receptor-mediated nucleocytoplasmic transport. Interacts with GDP-bound RAN in the cytosol, recruits it to the nuclear pore complex via its interaction with nucleoporins and promotes its nuclear import. The polypeptide is Nuclear transport factor 2 (Dictyostelium discoideum (Social amoeba)).